We begin with the raw amino-acid sequence, 1278 residues long: ABC transporter B family member 11 (1278 aa).

2 stretches are compositionally biased toward basic and acidic residues: residues 1–13 (MNGD…DSVS) and 21–35 (SPKE…EKSE). The interval 1 to 35 (MNGDGAREGDSVSHEPSTSKSPKEGEETKKEEKSE) is disordered. The next 6 membrane-spanning stretches (helical) occupy residues 55-75 (VLLM…LPFM), 106-126 (FVYL…CWMI), 182-202 (FIQL…KGWL), 205-225 (LVML…ALIV), 285-305 (GLGL…AIWF), and 314-334 (GYTG…SMSL). Residues 58-346 (MICGSIGAIG…TSPCVTAFAA (289 aa)) enclose the ABC transmembrane type-1 1 domain. In terms of domain architecture, ABC transporter 1 spans 381-617 (IELKDVHFSY…SEGAYSQLIR (237 aa)). ATP is bound at residue 416 to 423 (GESGSGKS). N-linked (GlcNAc...) asparagine glycans are attached at residues Asn-483, Asn-568, and Asn-653. A compositionally biased stretch (polar residues) spans 629 to 654 (ELSSGSSFRNSNLKKSMEGTSSVGNS). The segment at 629–656 (ELSSGSSFRNSNLKKSMEGTSSVGNSSR) is disordered. The ABC transmembrane type-1 2 domain maps to 710–997 (LLLGTVAAAI…SSTFAPDSSK (288 aa)). The next 2 membrane-spanning stretches (helical) occupy residues 711 to 731 (LLGT…GILI) and 751 to 771 (FWAI…PTQM). An N-linked (GlcNAc...) asparagine glycan is attached at Asn-806. The next 4 helical transmembrane spans lie at 824-844 (ALVG…ASGL), 845-865 (IIAF…LPLI), 932-952 (GFIS…VYAT), and 971-991 (VFQV…SSTF). An ABC transporter 2 domain is found at 1032–1271 (IELRHLSFTY…EGGVYASLVQ (240 aa)). 1067–1074 (GESGSGKS) contacts ATP. Residues Asn-1121 and Asn-1222 are each glycosylated (N-linked (GlcNAc...) asparagine).

This sequence belongs to the ABC transporter superfamily. ABCB family. Multidrug resistance exporter (TC 3.A.1.201) subfamily. As to expression, present in roots and flower buds.

Its subcellular location is the membrane. The catalysed reaction is (indol-3-yl)acetate(in) + ATP + H2O = (indol-3-yl)acetate(out) + ADP + phosphate + H(+). Its function is as follows. Involved in the regulation of auxin transport required for pistil elongation. The chain is ABC transporter B family member 11 from Arabidopsis thaliana (Mouse-ear cress).